The following is an 87-amino-acid chain: Small ribosomal subunit protein bS20 (87 aa).

Residues 1–26 are disordered; sequence MANIKSAKKRAIQAEKARKHNASRRS.

The protein belongs to the bacterial ribosomal protein bS20 family.

Its function is as follows. Binds directly to 16S ribosomal RNA. This is Small ribosomal subunit protein bS20 from Tolumonas auensis (strain DSM 9187 / NBRC 110442 / TA 4).